A 610-amino-acid polypeptide reads, in one-letter code: Elongation factor 4 (610 aa).

The 183-residue stretch at 13–195 folds into the tr-type G domain; that stretch reads SHIRNFSIVA…AIVHKLPAPK (183 aa). GTP contacts are provided by residues 25 to 30 and 142 to 145; these read DHGKST and NKID.

This sequence belongs to the TRAFAC class translation factor GTPase superfamily. Classic translation factor GTPase family. LepA subfamily.

Its subcellular location is the cell inner membrane. The catalysed reaction is GTP + H2O = GDP + phosphate + H(+). Functionally, required for accurate and efficient protein synthesis under certain stress conditions. May act as a fidelity factor of the translation reaction, by catalyzing a one-codon backward translocation of tRNAs on improperly translocated ribosomes. Back-translocation proceeds from a post-translocation (POST) complex to a pre-translocation (PRE) complex, thus giving elongation factor G a second chance to translocate the tRNAs correctly. Binds to ribosomes in a GTP-dependent manner. This chain is Elongation factor 4, found in Rhizobium etli (strain ATCC 51251 / DSM 11541 / JCM 21823 / NBRC 15573 / CFN 42).